Here is a 67-residue protein sequence, read N- to C-terminus: Large ribosomal subunit protein bL35 (67 aa).

The protein belongs to the bacterial ribosomal protein bL35 family.

This is Large ribosomal subunit protein bL35 from Gloeothece citriformis (strain PCC 7424) (Cyanothece sp. (strain PCC 7424)).